The following is a 750-amino-acid chain: GTP pyrophosphokinase rsh (750 aa).

Residues 45–144 (YFSHPLEVAA…VKLADRLHNM (100 aa)) form the HD domain. In terms of domain architecture, TGS spans 390–451 (DQVFCFTPKG…KNGDEVDIIR (62 aa)). A disordered region spans residues 587 to 613 (AAKVDPAATTPKPGKRALPIRGTNPDL). The ACT domain maps to 676–750 (RISVSAINSP…SVSSAKRVNG (75 aa)).

It belongs to the RelA/SpoT family.

The catalysed reaction is GTP + ATP = guanosine 3'-diphosphate 5'-triphosphate + AMP. In terms of biological role, functions as a (p)ppGpp synthase. In eubacteria ppGpp (guanosine 3'-diphosphate 5'-diphosphate) is a mediator of the stringent response that coordinates a variety of cellular activities in response to changes in nutritional abundance. It is necessary for persistence in mice, essential for intracellular growth of Brucella and required for expression of the type IV secretion system VirB and therefore plays a role in adaptation of Brucella to its intracellular host environment. The chain is GTP pyrophosphokinase rsh (rsh) from Brucella suis biovar 1 (strain 1330).